Consider the following 379-residue polypeptide: Nucleosome assembly protein 1;2 (379 aa).

Residues 26 to 80 are a coiled coil; it reads VNALKNKLQNLAGQHSDVLENLTPPVRKRVEFLREIQNQYDEMEAKFFEERAALE. Position 41 is a phosphoserine (serine 41). The Nuclear export signal motif lies at 47–62; that stretch reads LTPPVRKRVEFLREIQ. The Nuclear localization signal motif lies at 222–227; sequence KKKPKK. The tract at residues 298 to 379 is disordered; sequence AVEADDLDIE…GERPPECKQQ (82 aa). Over residues 299–342 the composition is skewed to acidic residues; it reads VEADDLDIEDDDDEIDEDDDEEDEEDDEDDEEEDDEDDDEEEEA. Residues 347-360 are compositionally biased toward basic residues; it reads KSKKKSSAGHKKAG. Cysteine 376 carries the post-translational modification Cysteine methyl ester. Cysteine 376 is lipidated: S-farnesyl cysteine. Positions 377-379 are cleaved as a propeptide — removed in mature form; it reads KQQ.

This sequence belongs to the nucleosome assembly protein (NAP) family. As to quaternary structure, can form homomeric and heteromeric protein complexes with NAP1;1, NAP1;3 and NAP1;4. Binds histone H2A. Ubiquitous.

Its subcellular location is the nucleus. It localises to the cytoplasm. In terms of biological role, may modulate chromatin structure by regulation of nucleosome assembly/disassembly. May function in nucleotide excision repair (NER). Involved in somatic homologous recombination. The protein is Nucleosome assembly protein 1;2 (NAP1;2) of Arabidopsis thaliana (Mouse-ear cress).